Consider the following 198-residue polypeptide: Ribonuclease HII 1 (198 aa).

One can recognise an RNase H type-2 domain in the interval 7-196; that stretch reads ELTAGVDEAG…VRAALARAAA (190 aa). Residues D13, E14, and D105 each contribute to the a divalent metal cation site.

This sequence belongs to the RNase HII family. Mn(2+) is required as a cofactor. It depends on Mg(2+) as a cofactor.

The protein localises to the cytoplasm. It catalyses the reaction Endonucleolytic cleavage to 5'-phosphomonoester.. Endonuclease that specifically degrades the RNA of RNA-DNA hybrids. In Methylibium petroleiphilum (strain ATCC BAA-1232 / LMG 22953 / PM1), this protein is Ribonuclease HII 1.